We begin with the raw amino-acid sequence, 282 residues long: Complement component 1 Q subcomponent-binding protein, mitochondrial (282 aa).

The N-terminal 70 residues, 1–70 (MLPLLRCVPR…PRGPCACGCG (70 aa)), are a transit peptide targeting the mitochondrion. The interval 76 to 93 (TEGDKAFVDFLNDEIKEE) is C1q binding. An N6-acetyllysine modification is found at Lys91. The interval 137–163 (NSIPPTFDGEEEPTQGQKVEEQEPELT) is disordered. An interaction with MAVS region spans residues 168 to 213 (FVVEVIKNDDGKKALVLDCHYPEDEVGQEDEAESDIFSIREVSFQS). Tyr188 is subject to Phosphotyrosine. Phosphoserine is present on residues Ser201 and Ser205.

Belongs to the MAM33 family. In terms of assembly, homotrimer; three monomers form a donut-shaped structure with an unusually asymmetric charge distribution on the surface. Interacts with CDK13, HRK, VTN, NFYB, ADRA1B, FOXC1, DDX21, DDX50, NCL, SRSF1 and SRSF9. Interacts with CD93; the association may represent a cell surface C1q receptor. Interacts with KRT1; the association represents a cell surface kininogen receptor. Interacts with CD209; the interaction is indicative for a C1q:C1QBP:CD209 signaling complex. Interacts with FBL and RRP1; the respective interactions with C1QBP are competitive. Probably associates with the mitoribosome. Interacts with MAVS; the interaction occurs upon viral transfection. Interacts with PPIF. Interacts with U2AF1L4. Interacts with PLEKHN1. Interacts with VGF-derived peptide TLQP-21. Interacts with MRE11 and RAD50; forming the MRC (MRE11-RAD50-C1QBP) complex that inhibits the activity of MRE11. As to quaternary structure, (Microbial infection) Interacts with Rubella virus capsid protein; the interaction occurs in mitochondria. (Microbial infection) Interacts with L.monocytogenes InlB.

It localises to the mitochondrion matrix. The protein resides in the nucleus. It is found in the cell membrane. Its subcellular location is the secreted. The protein localises to the cytoplasm. It localises to the nucleolus. Its function is as follows. Multifunctional and multicompartmental protein involved in inflammation and infection processes, ribosome biogenesis, protein synthesis in mitochondria, regulation of apoptosis, transcriptional regulation and pre-mRNA splicing. At the cell surface is thought to act as an endothelial receptor for plasma proteins of the complement and kallikrein-kinin cascades. Putative receptor for C1q; specifically binds to the globular 'heads' of C1q thus inhibiting C1; may perform the receptor function through a complex with C1qR/CD93. In complex with cytokeratin-1/KRT1 is a high affinity receptor for kininogen-1/HMWK. Can also bind other plasma proteins, such as coagulation factor XII leading to its autoactivation. May function to bind initially fluid kininogen-1 to the cell membrane. The secreted form may enhance both extrinsic and intrinsic coagulation pathways. It is postulated that the cell surface form requires docking with transmembrane proteins for downstream signaling which might be specific for a cell-type or response. By acting as C1q receptor is involved in chemotaxis of immature dendritic cells and neutrophils and is proposed to signal through CD209/DC-SIGN on immature dendritic cells, through integrin alpha-4/beta-1 during trophoblast invasion of the decidua, and through integrin beta-1 during endothelial cell adhesion and spreading. Signaling involved in inhibition of innate immune response is implicating the PI3K-AKT/PKB pathway. Required for protein synthesis in mitochondria. In mitochondrial translation may be involved in formation of functional 55S mitoribosomes; the function seems to involve its RNA-binding activity. Acts as a RNA modification reader, which specifically recognizes and binds mitochondrial RNAs modified by C5-methylcytosine (m5C) in response to stress, and promotes recruitment of the mitochondrial degradosome complex, leading to their degradation. May be involved in the nucleolar ribosome maturation process; the function may involve the exchange of FBL for RRP1 in the association with pre-ribosome particles. Involved in regulation of RNA splicing by inhibiting the RNA-binding capacity of SRSF1 and its phosphorylation. Is required for the nuclear translocation of splicing factor U2AF1L4. Involved in regulation of CDKN2A- and HRK-mediated apoptosis. Stabilizes mitochondrial CDKN2A isoform smARF. May be involved in regulation of FOXC1 transcriptional activity and NFY/CCAAT-binding factor complex-mediated transcription. May play a role in antibacterial defense as it can bind to cell surface hyaluronan and inhibit Streptococcus pneumoniae hyaluronate lyase. May be involved in modulation of the immune response; ligation by HCV core protein is resulting in suppression of interleukin-12 production in monocyte-derived dendritic cells. Involved in regulation of antiviral response by inhibiting RIGI- and IFIH1-mediated signaling pathways probably involving its association with MAVS after viral infection. Acts as a regulator of DNA repair via homologous recombination by inhibiting the activity of MRE11: interacts with unphosphorylated MRE11 and RAD50 in absence of DNA damage, preventing formation and activity of the MRN complex. Following DNA damage, dissociates from phosphorylated MRE11, allowing formation of the MRN complex. Functionally, (Microbial infection) During bacterial infection processes acts as an attachment site for microbial proteins, including Listeria monocytogenes internalin B (InlB). This is Complement component 1 Q subcomponent-binding protein, mitochondrial (C1QBP) from Chlorocebus aethiops (Green monkey).